Reading from the N-terminus, the 201-residue chain is Adapter protein MecA 1 (201 aa).

The protein belongs to the MecA family. Homodimer.

Enables the recognition and targeting of unfolded and aggregated proteins to the ClpC protease or to other proteins involved in proteolysis. Acts negatively in the development of competence by binding ComK and recruiting it to the ClpCP protease. When overexpressed, inhibits sporulation. Also involved in Spx degradation by ClpC. The polypeptide is Adapter protein MecA 1 (mecA1) (Halalkalibacterium halodurans (strain ATCC BAA-125 / DSM 18197 / FERM 7344 / JCM 9153 / C-125) (Bacillus halodurans)).